The sequence spans 1218 residues: Sodium bicarbonate cotransporter 3 (1218 aa).

2 disordered regions span residues 1-31 (MEAD…KTSS) and 53-99 (HVPF…SQRV). Residues 1–612 (MEADGAGEQM…DFKDALSLQC (612 aa)) lie on the Extracellular side of the membrane. Ser-57, Ser-60, Ser-89, and Ser-155 each carry phosphoserine. A compositionally biased stretch (basic residues) spans 60 to 77 (SRRRHRHRGHKHHHRRRK). A compositionally biased stretch (basic and acidic residues) spans 78–90 (DKDSDKEDGRESP). Asn-176 is a glycosylation site (N-linked (GlcNAc...) asparagine). Phosphoserine is present on residues Ser-238, Ser-247, and Arg-263. An N-linked (GlcNAc...) asparagine glycan is attached at Asn-274. Disordered regions lie at residues 294–350 (SRAG…DIPR), 364–412 (KGQE…ENST), and 536–577 (SIRI…HAGP). The segment covering 308-318 (VPTPQNSPPSS) has biased composition (pro residues). Low complexity predominate over residues 319 to 337 (PSLSRLTSRSSQQTQPQAP). A compositionally biased stretch (polar residues) spans 383–396 (SPQSAPGNLDSSKS). Residues Ser-386, Ser-404, and Ser-407 each carry the phosphoserine modification. Asn-410 carries N-linked (GlcNAc...) asparagine glycosylation. 2 positions are modified to phosphoserine: Ser-411 and Ser-560. A compositionally biased stretch (basic and acidic residues) spans 567-576 (PPKEADHHAG). Residues 613–633 (LASILFLYCACMSPVITFGGL) form a helical membrane-spanning segment. The Cytoplasmic portion of the chain corresponds to 634–641 (LGEATEGR). The chain crosses the membrane as a helical span at residues 642–662 (ISAIESLFGASLTGIAYSLFA). Topologically, residues 663–699 (GQPLTILGSTGPVLVFEKILFKFCRDYHLSYLSLRTS) are extracellular. Residues 700-720 (IGLWTSFLCIVLVATDASSLV) traverse the membrane as a helical segment. The Cytoplasmic segment spans residues 721–729 (CYITRFTEE). Residues 730-750 (AFAALICIIFIYEALEKLFHL) form a helical membrane-spanning segment. Residues 751-821 (GEIYAFNMHN…MFVGSACGPH (71 aa)) lie on the Extracellular side of the membrane. A disulfide bond links Cys-770 and Cys-772. 3 N-linked (GlcNAc...) asparagine glycosylation sites follow: Asn-780, Asn-790, and Asn-800. The cysteines at positions 806 and 818 are disulfide-linked. Residues 822 to 842 (GPYVPDVLFWCVVLFFTTFFL) form a helical membrane-spanning segment. Over 843-865 (SSFLKQFKTKRYFPTKVRSTISD) the chain is Cytoplasmic. A helical membrane pass occupies residues 866 to 886 (FAVFLTIVIMVAIDYLVGIPS). Residues 887-912 (PKLHVPEKFEPTDPSRGWIISPLGDN) lie on the Extracellular side of the membrane. The chain crosses the membrane as a helical span at residues 913 to 933 (PWWTLLIAAVPALLCTILIFM). Over 934–958 (DQQITAVIINRKEHKLKKGAGYHLD) the chain is Cytoplasmic. The helical transmembrane segment at 959 to 979 (LLMVAVMLGVCSIMGLPWFVA) threads the bilayer. At 980 to 1015 (ATVLSISHVNSLKVESECSAPGEQPKFLGIREQRVT) the chain is on the extracellular side. The essential for cell membrane localization and transport activity stretch occupies residues 1012 to 1135 (QRVTGLMIFI…MDLCFTKREL (124 aa)). Residues 1016–1036 (GLMIFILMGLSVFMTSVLKFI) traverse the membrane as a helical segment. Over 1037–1038 (PM) the chain is Cytoplasmic. Residues 1039–1059 (PVLYGVFLYMGVSSLKGIQFF) traverse the membrane as a helical segment. At 1060 to 1096 (DRIKLFGMPAKHQPDLIYLRYVPLWKVHVFTVVQLTC) the chain is on the extracellular side. 2 positions are modified to phosphoserine: Met-1067 and Leu-1078. The helical transmembrane segment at 1097-1117 (LVLLWVIKASAAAVVFPMMVL) threads the bilayer. The tract at residues 1118 to 1140 (ALVFVRKLMDLCFTKRELSWLDD) is essential for interaction with RACK1. Residues 1118-1218 (ALVFVRKLMD…KKYMDAETSL (101 aa)) lie on the Cytoplasmic side of the membrane. Residues 1138-1140 (LDD) form a CA2-binding region. Positions 1148–1165 (KKEDDKKKKEKEEAERML) are enriched in basic and acidic residues. The segment at 1148 to 1172 (KKEDDKKKKEKEEAERMLQGDGDTV) is disordered. Thr-1171 carries the phosphothreonine modification. A phosphoserine mark is found at Ser-1180, Thr-1188, Ile-1201, and Ser-1217. The short motif at 1215–1218 (ETSL) is the PDZ-binding element.

This sequence belongs to the anion exchanger (TC 2.A.31) family. As to quaternary structure, interacts with USH1C. Forms a complex with ATP6V1B1 and NHERF1/EBP50. Interacts in a pH dependent-manner with CA2/carbonic anhydrase 2. Interacts with CFTR probably through NHERF1/EBP50. In terms of assembly, interacts with RACK1. In terms of processing, undergoes lysosome-mediated degradation. N-glycosylated. Expressed in aorta, ventricles, atrium, mesenteric artery, kidney, spleen, duodenum, jejunum, ileum, colon, lung, trachea, gastric fundus and pylorus, cerebrum, cerebellum, pancreas, liver, parotid gland, and epididymis. Expressed in the inner ear by cochlear outer and inner hair cells (at protein level). Highly expressed in testis and spleen. As to expression, specifically expressed in kidney. In terms of tissue distribution, specifically expressed in hippocampal neurons.

It is found in the basolateral cell membrane. Its subcellular location is the apical cell membrane. It localises to the cell projection. The protein localises to the stereocilium. The protein resides in the cell membrane. It carries out the reaction hydrogencarbonate(in) + Na(+)(in) = hydrogencarbonate(out) + Na(+)(out). Insensitive to stilbene derivatives. Functionally, electroneutral sodium- and bicarbonate-dependent cotransporter with a Na(+):HCO3(-) 1:1 stoichiometry. Mediates the sodium-dependent bicarbonate transport important for pH recovery after acid load as well as for regulation of steady-state pH in the duodenum and vascular smooth muscle cells. Plays a key role in macrophage acidification, mediating bicarbonate import into the cytoplasm which is crucial for net acid extrusion and maintenance of cytoplasmic pH during phagocytosis. Provides cellular bicarbonate for de novo purine and pyrimidine synthesis and is a key mediator of de novo nucleotide synthesis downstream of mTORC1 signaling in proliferating cells. In Rattus norvegicus (Rat), this protein is Sodium bicarbonate cotransporter 3 (Slc4a7).